A 119-amino-acid polypeptide reads, in one-letter code: Large ribosomal subunit protein bL20 (119 aa).

It belongs to the bacterial ribosomal protein bL20 family.

In terms of biological role, binds directly to 23S ribosomal RNA and is necessary for the in vitro assembly process of the 50S ribosomal subunit. It is not involved in the protein synthesizing functions of that subunit. This is Large ribosomal subunit protein bL20 from Rhodopseudomonas palustris (strain BisA53).